The following is an 840-amino-acid chain: Phosphatidylglycerol lysyltransferase (840 aa).

Over 1 to 8 (MTQELKSK) the chain is Cytoplasmic. A helical transmembrane segment spans residues 9–29 (LLSFFKFIFATALFIFVIFTL). At 30-52 (YRELSHINFKETFIQFGKINRLW) the chain is on the extracellular side. The helical transmembrane segment at 53–73 (LVLLFAGGGLSLILLSLYDII) threads the bilayer. Topologically, residues 74-89 (LVKALKLKMPLIRVFR) are cytoplasmic. A helical transmembrane segment spans residues 90 to 110 (VSYIINALNSIIGFGGFIGAG). Over 111–129 (VRAFVYKNYTNDTKKLVQY) the chain is Extracellular. A helical transmembrane segment spans residues 130–150 (ISIILVSMLTGLSLLSILVVL). At 151-161 (RIFNASHMIDE) the chain is on the cytoplasmic side. Residues 162-182 (ISWVRWILYIVALFLPIFIFY) form a helical membrane-spanning segment. At 183–200 (TVARPVDRNNRYMGVYCT) the chain is on the extracellular side. Residues 201 to 221 (VVSCVEWMAAATVLYFAALIV) traverse the membrane as a helical segment. Residues 222-229 (DIHISFMT) are Cytoplasmic-facing. The chain crosses the membrane as a helical span at residues 230–250 (FVGIFVIAALSGLVSFIPGGF). The Extracellular portion of the chain corresponds to 251 to 270 (GAFDLVVLLGLKSLGISEEK). The chain crosses the membrane as a helical span at residues 271–291 (ILLALVLYRFAYYFVPVMIAL). The Cytoplasmic segment spans residues 292 to 337 (ILSSFEFGNTAKKYLDNSKYFIPVKDFTSFLRSYQKDILAKVPSFS). The helical transmembrane segment at 338–358 (LAILIFLTSIIFFINNLTIVY) threads the bilayer. Residues 359–366 (DGLYDGNH) are Extracellular-facing. Residues 367 to 387 (FAYYIALAIQTSACLLLILNV) traverse the membrane as a helical segment. Residues 388 to 392 (RGIYK) lie on the Cytoplasmic side of the membrane. A helical transmembrane segment spans residues 393–413 (GSRRAIIYAFISIILIASATI). Residues 414–415 (YT) are Extracellular-facing. A helical transmembrane segment spans residues 416 to 436 (YASFLLLSWLIIIFVLLILAY). Over 437 to 450 (QRAQVLKRPLRFKK) the chain is Cytoplasmic. The helical transmembrane segment at 451-471 (LAFMLLLSIFILYLNHILISG) threads the bilayer. At 472–489 (TLYALDVYHIEIDTSLLR) the chain is on the extracellular side. Residues 490 to 510 (YYFWMTIVIIMLLVGVIAWLF) traverse the membrane as a helical segment. Residues 511–840 (DYKYKRPHHS…LKVMRVIRHK (330 aa)) are Cytoplasmic-facing.

This sequence belongs to the LPG synthase family.

The protein localises to the cell membrane. It catalyses the reaction L-lysyl-tRNA(Lys) + a 1,2-diacyl-sn-glycero-3-phospho-(1'-sn-glycerol) = a 1,2-diacyl-sn-glycero-3-phospho-1'-(3'-O-L-lysyl)-sn-glycerol + tRNA(Lys). In terms of biological role, catalyzes the transfer of a lysyl group from L-lysyl-tRNA(Lys) to membrane-bound phosphatidylglycerol (PG), which produces lysylphosphatidylglycerol (LPG), a major component of the bacterial membrane with a positive net charge. LPG synthesis contributes to bacterial virulence as it is involved in the resistance mechanism against cationic antimicrobial peptides (CAMP) produces by the host's immune system (defensins, cathelicidins) and by the competing microorganisms (bacteriocins). In fact, the modification of anionic phosphatidylglycerol with positively charged L-lysine results in repulsion of the peptides. The polypeptide is Phosphatidylglycerol lysyltransferase (mprF) (Staphylococcus epidermidis (strain ATCC 35984 / DSM 28319 / BCRC 17069 / CCUG 31568 / BM 3577 / RP62A)).